The primary structure comprises 184 residues: Cytidylate kinase (184 aa).

An ATP-binding site is contributed by 8–16 (GQPGSGKTT).

Belongs to the cytidylate kinase family. Type 2 subfamily.

Its subcellular location is the cytoplasm. It carries out the reaction CMP + ATP = CDP + ADP. The catalysed reaction is dCMP + ATP = dCDP + ADP. The protein is Cytidylate kinase of Pyrobaculum calidifontis (strain DSM 21063 / JCM 11548 / VA1).